Consider the following 411-residue polypeptide: Replication factor C subunit 2 (411 aa).

The disordered stretch occupies residues 1-36 (MADFFNLKARQQAAAQASSSKTPTSKQESNRLQPWV). The segment covering 11 to 27 (QQAAAQASSSKTPTSKQ) has biased composition (low complexity). Residues valine 36, arginine 40, 73 to 81 (GPPGTGKTS), asparagine 195, and arginine 253 contribute to the ATP site.

The protein belongs to the activator 1 small subunits family. Heteropentamer of subunits RFC1, RFC2, RFC3, RFC4 and RFC5 that forms a complex with PCNA in the presence of ATP.

It is found in the nucleus. In terms of biological role, the elongation of primed DNA templates by DNA polymerase delta and epsilon requires the action of the accessory proteins proliferating cell nuclear antigen (PCNA) and activator 1. Subunit 2 binds ATP and single-stranded DNA. The chain is Replication factor C subunit 2 (RFC2) from Phaeosphaeria nodorum (strain SN15 / ATCC MYA-4574 / FGSC 10173) (Glume blotch fungus).